Here is a 121-residue protein sequence, read N- to C-terminus: B-box domain protein 31 (121 aa).

The B box-type; atypical zinc-finger motif lies at 26–72 (SVPVRCELCDGDASVFCEADSAFLCRKCDRWVHGANFLAWRHVRRVL). Positions 117 to 121 (PFVFL) match the PFVFL motif.

In terms of tissue distribution, highly expressed in shoot apical meristems and in vascular tissues of leaves. Also detected in petioles.

Developmental regulator acting by forming heterodimeric complexes, that sequester CO and CO-like (COL) proteins into non-functional complexes. Involved in the CO-mediated long-day flowering-promotion pathway. Engages CO and the transcriptional repressor TPL in a tripartite complex. The sequence is that of B-box domain protein 31 from Arabidopsis thaliana (Mouse-ear cress).